Consider the following 262-residue polypeptide: MQVDLLSSAQSAHTLHLFHQHSPLVHCMTNDVVQTFTANTLLALGASPAMVIETEEASQFAAIASALLINVGTLTQPRAQAMRAAVEQAKSSQTPWTLDPVAVGALDYRRRFCLELLSHKPTAIRGNASEIMALAGVANGGRGVDTTDAAANAIPAAQTLARETGAIVVVTGEVDYVTDGHRIVGIHGGDPLMTKVVGTGCALSAVVAACCALPGDMLENVASACHWMKQAGERAVARSEGPGSFVPHFLDALWQLTQEVQA.

Residue Met50 coordinates substrate. The ATP site is built by Arg125 and Thr171. Gly198 serves as a coordination point for substrate.

The protein belongs to the Thz kinase family. Requires Mg(2+) as cofactor.

It catalyses the reaction 5-(2-hydroxyethyl)-4-methylthiazole + ATP = 4-methyl-5-(2-phosphooxyethyl)-thiazole + ADP + H(+). It participates in cofactor biosynthesis; thiamine diphosphate biosynthesis; 4-methyl-5-(2-phosphoethyl)-thiazole from 5-(2-hydroxyethyl)-4-methylthiazole: step 1/1. Its function is as follows. Catalyzes the phosphorylation of the hydroxyl group of 4-methyl-5-beta-hydroxyethylthiazole (THZ). The polypeptide is Hydroxyethylthiazole kinase (Shigella boydii serotype 18 (strain CDC 3083-94 / BS512)).